A 224-amino-acid polypeptide reads, in one-letter code: Uracil-DNA glycosylase (224 aa).

Residue aspartate 64 is the Proton acceptor of the active site.

Belongs to the uracil-DNA glycosylase (UDG) superfamily. UNG family.

Its subcellular location is the cytoplasm. The enzyme catalyses Hydrolyzes single-stranded DNA or mismatched double-stranded DNA and polynucleotides, releasing free uracil.. Its function is as follows. Excises uracil residues from the DNA which can arise as a result of misincorporation of dUMP residues by DNA polymerase or due to deamination of cytosine. The polypeptide is Uracil-DNA glycosylase (Geobacillus sp. (strain WCH70)).